The sequence spans 326 residues: Protein TMED8 (326 aa).

Positions 1–99 (MSDRQAAEGP…EGQAPGEQAA (99 aa)) are disordered. The span at 50-65 (SSPLASASDPAAESSP) shows a compositional bias: low complexity. The 165-residue stretch at 160-324 (PPCVWTFAKV…NKTLYFHIYY (165 aa)) folds into the GOLD domain. At Lys-170 the chain carries N6-acetyllysine. The interval 234 to 268 (VQVSDSSEDEEEEEDEEEEIEEPVPVGDVERGSRS) is disordered. The segment covering 239 to 255 (SSEDEEEEEDEEEEIEE) has biased composition (acidic residues).

The chain is Protein TMED8 (Tmed8) from Mus musculus (Mouse).